The chain runs to 905 residues: DNA gyrase subunit A (905 aa).

Residues 35 to 524 (IPDVRDGLKP…GEFDQDIEDL (490 aa)) form the Topo IIA-type catalytic domain. The active-site O-(5'-phospho-DNA)-tyrosine intermediate is the Tyr123. The GyrA-box motif lies at 551 to 557 (QKRGGKG). Residues 882–905 (IAESSDDNEEDSEFEEEVAEEGSE) form a disordered region. Over residues 885–905 (SSDDNEEDSEFEEEVAEEGSE) the composition is skewed to acidic residues.

This sequence belongs to the type II topoisomerase GyrA/ParC subunit family. Heterotetramer, composed of two GyrA and two GyrB chains. In the heterotetramer, GyrA contains the active site tyrosine that forms a transient covalent intermediate with DNA, while GyrB binds cofactors and catalyzes ATP hydrolysis.

Its subcellular location is the cytoplasm. The catalysed reaction is ATP-dependent breakage, passage and rejoining of double-stranded DNA.. Functionally, a type II topoisomerase that negatively supercoils closed circular double-stranded (ds) DNA in an ATP-dependent manner to modulate DNA topology and maintain chromosomes in an underwound state. Negative supercoiling favors strand separation, and DNA replication, transcription, recombination and repair, all of which involve strand separation. Also able to catalyze the interconversion of other topological isomers of dsDNA rings, including catenanes and knotted rings. Type II topoisomerases break and join 2 DNA strands simultaneously in an ATP-dependent manner. This is DNA gyrase subunit A from Rickettsia bellii (strain RML369-C).